The primary structure comprises 904 residues: Conserved oligomeric Golgi complex subunit 2 (904 aa).

Disordered stretches follow at residues 384–424 (KEKQ…INNN) and 644–669 (IKIT…LNNK). Composition is skewed to low complexity over residues 388–424 (SNNN…INNN) and 652–663 (PSLSNQSPISSS).

The protein belongs to the COG2 family. Component of the conserved oligomeric Golgi complex which is composed of eight different subunits and is required for normal Golgi morphology and localization.

It is found in the golgi apparatus membrane. Its function is as follows. Required for normal Golgi function. This chain is Conserved oligomeric Golgi complex subunit 2 (cog2), found in Dictyostelium discoideum (Social amoeba).